We begin with the raw amino-acid sequence, 35 residues long: Cupiennin-1a (35 aa).

Glu-35 carries the glutamic acid 1-amide modification.

Belongs to the cationic peptide 04 (cupiennin) family. 01 subfamily. In terms of assembly, monomer. Interacts with CSTX-1 (AC P81694), CSTX-9 (AC P58604), and CSTX-13 (AC P83919). Expressed by the venom gland.

The protein localises to the secreted. Its function is as follows. Has antimicrobial activity against B.subtilis, E.coli, E.faecalis, P.denitrificans, P.aeruginosa, P.putida, S.aureus, and S.epidermidis. Shows insecticidal and hemolytic activities. Probably acts by disturbing membrane function with its amphipathic structure. Synergistically increases the insecticidal activity of CSTX-1 (AC P81694), CSTX-9 (AC P58604), and CSTX-13 (AC P83919) by up to 65%. Also inhibits the formation of nitric oxide by neuronal nitric oxide synthase. This chain is Cupiennin-1a, found in Cupiennius salei (American wandering spider).